Reading from the N-terminus, the 177-residue chain is Archaemetzincin (177 aa).

His129 is a binding site for Zn(2+). The Proton acceptor role is filled by Glu130. Positions 133, 139, 140, 145, 164, and 167 each coordinate Zn(2+).

It belongs to the peptidase M54 family. As to quaternary structure, monomer. The cofactor is Zn(2+).

Its function is as follows. Probable zinc metalloprotease whose natural substrate is unknown. The sequence is that of Archaemetzincin from Sulfolobus acidocaldarius (strain ATCC 33909 / DSM 639 / JCM 8929 / NBRC 15157 / NCIMB 11770).